The chain runs to 422 residues: Testin (422 aa).

The 108-residue stretch at Met-92–Glu-199 folds into the PET domain. Residues Leu-198–Asp-224 form a disordered region. Positions Lys-205–Ala-217 are enriched in polar residues. 3 consecutive LIM zinc-binding domains span residues Tyr-234–Glu-297, Pro-299–Ala-359, and Gln-362–Ser-422.

It belongs to the prickle / espinas / testin family.

Its subcellular location is the cytoplasm. It is found in the cell junction. The protein resides in the focal adhesion. Functionally, scaffold protein that may play a role in cell adhesion, cell spreading and in the reorganization of the actin cytoskeleton. May play a role in the regulation of cell proliferation. May inhibit cell growth. The chain is Testin (TES) from Gallus gallus (Chicken).